The primary structure comprises 571 residues: Adenine deaminase (571 aa).

Belongs to the metallo-dependent hydrolases superfamily. Adenine deaminase family. Mn(2+) serves as cofactor.

It catalyses the reaction adenine + H2O + H(+) = hypoxanthine + NH4(+). The polypeptide is Adenine deaminase (Dehalococcoides mccartyi (strain ATCC BAA-2266 / KCTC 15142 / 195) (Dehalococcoides ethenogenes (strain 195))).